The primary structure comprises 277 residues: Sulfur carrier protein FdhD (277 aa).

Cys-121 serves as the catalytic Cysteine persulfide intermediate. 260 to 265 is a binding site for Mo-bis(molybdopterin guanine dinucleotide); it reads FCKPGR.

It belongs to the FdhD family.

It localises to the cytoplasm. In terms of biological role, required for formate dehydrogenase (FDH) activity. Acts as a sulfur carrier protein that transfers sulfur from IscS to the molybdenum cofactor prior to its insertion into FDH. The sequence is that of Sulfur carrier protein FdhD from Shigella flexneri serotype 5b (strain 8401).